The chain runs to 750 residues: Photosystem I P700 chlorophyll a apoprotein A1 (750 aa).

8 helical membrane passes run 70 to 93 (VFSAHFGQLSIIFLWLSGMYFHGA), 156 to 179 (LYCTAIGALIFAALMLFAGWFHYH), 195 to 219 (LNHHLAGLLGLGSLSWAGHQVHVSL), 291 to 309 (IAHHHLAIAILFLIAGHMY), 346 to 369 (WHAQLSLNLAMLGSLTIVVAHHMY), 385 to 411 (LSLFTHHMWIGGFLIVGAAAHAAIFMV), 433 to 455 (AIISHLNWACIFLGFHSFGLYIH), and 531 to 549 (FLVHHIHAFTIHVTVLILL). 2 residues coordinate [4Fe-4S] cluster: Cys-573 and Cys-582. Transmembrane regions (helical) follow at residues 589 to 610 (HVFLGLFWMYNAISVVIFHFSW) and 664 to 686 (LSAYGLFFLGAHFVWAFSLMFLF). His-675 is a binding site for chlorophyll a'. Chlorophyll a contacts are provided by Met-683 and Tyr-691. Trp-692 serves as a coordination point for phylloquinone. A helical membrane pass occupies residues 724 to 744 (AVGVTHYLLGGIATTWAFFLA).

The protein belongs to the PsaA/PsaB family. In terms of assembly, the PsaA/B heterodimer binds the P700 chlorophyll special pair and subsequent electron acceptors. PSI consists of a core antenna complex that captures photons, and an electron transfer chain that converts photonic excitation into a charge separation. The eukaryotic PSI reaction center is composed of at least 11 subunits. The cofactor is P700 is a chlorophyll a/chlorophyll a' dimer, A0 is one or more chlorophyll a, A1 is one or both phylloquinones and FX is a shared 4Fe-4S iron-sulfur center..

Its subcellular location is the plastid. The protein localises to the chloroplast thylakoid membrane. It carries out the reaction reduced [plastocyanin] + hnu + oxidized [2Fe-2S]-[ferredoxin] = oxidized [plastocyanin] + reduced [2Fe-2S]-[ferredoxin]. In terms of biological role, psaA and PsaB bind P700, the primary electron donor of photosystem I (PSI), as well as the electron acceptors A0, A1 and FX. PSI is a plastocyanin-ferredoxin oxidoreductase, converting photonic excitation into a charge separation, which transfers an electron from the donor P700 chlorophyll pair to the spectroscopically characterized acceptors A0, A1, FX, FA and FB in turn. Oxidized P700 is reduced on the lumenal side of the thylakoid membrane by plastocyanin. This Panax ginseng (Korean ginseng) protein is Photosystem I P700 chlorophyll a apoprotein A1.